Here is a 168-residue protein sequence, read N- to C-terminus: Nucleoside deoxyribosyltransferase (168 aa).

The Nucleophile role is filled by glutamate 103.

Belongs to the nucleoside deoxyribosyltransferase family.

The enzyme catalyses 2-deoxy-D-ribosyl-base(1) + base(2) = 2-deoxy-D-ribosyl-base(2) + base(1).. It participates in nucleotide metabolism; nucleotide salvage pathway. In terms of biological role, catalyzes the cleavage of the glycosidic bond of 2'-deoxyribonucleosides and the transfer of the deoxyribosyl moiety to an acceptor purine or pyrimidine base. The sequence is that of Nucleoside deoxyribosyltransferase (ntd) from Limosilactobacillus fermentum (Lactobacillus fermentum).